Consider the following 1462-residue polypeptide: Iron-sulfur cluster assembly protein SufD (1462 aa).

Disordered stretches follow at residues 500 to 525, 938 to 970, and 1111 to 1153; these read IDNN…DNPY, NQNK…GTEQ, and NIPS…EKEE. The span at 510–523 shows a compositional bias: low complexity; it reads NNNNNNNNNNNCDN. The span at 961–970 shows a compositional bias: basic and acidic residues; that stretch reads HIQDEQGTEQ. Low complexity predominate over residues 1111–1136; it reads NIPSNNKQTNSNNNSEYNNEQNNCSN.

The protein belongs to the iron-sulfur cluster assembly SufBD family. Component of a complex composed of SufB, SufC and SufD in a stoichiometric ratio of 1:2:1. Interacts with SufB. Interacts with SufC; the interaction enhances the ATPase activity of SufC. Post-translationally, proteolytically cleaved.

The protein resides in the plastid. It is found in the apicoplast. The protein operates within cofactor biosynthesis; iron-sulfur cluster biosynthesis. Its function is as follows. Participates in the sulfur mobilization (SUF) pathway for iron-sulfur (Fe-S) cluster biogenesis. As part of a complex consisting of SufB-SufC(2)-SufD, involved in assembly of [4Fe-4S] clusters. Enhances the ATPase activity of SufC. The polypeptide is Iron-sulfur cluster assembly protein SufD (Plasmodium falciparum (isolate 3D7)).